The sequence spans 202 residues: Glycerol-3-phosphate acyltransferase (202 aa).

The next 5 membrane-spanning stretches (helical) occupy residues 11 to 31, 60 to 80, 88 to 108, 117 to 137, and 162 to 182; these read LLLFWGGIGYLLGSVPFGMVI, AAAAATLLLDGGKGAAAVLLA, AAQLAGLLAFLGHCFPVWLGF, FLGLMLALAWPVGIACCLTWL, and LLLGAPQAAVLSALLALVILW.

The protein belongs to the PlsY family. As to quaternary structure, probably interacts with PlsX.

Its subcellular location is the cell inner membrane. The enzyme catalyses an acyl phosphate + sn-glycerol 3-phosphate = a 1-acyl-sn-glycero-3-phosphate + phosphate. The protein operates within lipid metabolism; phospholipid metabolism. In terms of biological role, catalyzes the transfer of an acyl group from acyl-phosphate (acyl-PO(4)) to glycerol-3-phosphate (G3P) to form lysophosphatidic acid (LPA). This enzyme utilizes acyl-phosphate as fatty acyl donor, but not acyl-CoA or acyl-ACP. The protein is Glycerol-3-phosphate acyltransferase of Ruegeria sp. (strain TM1040) (Silicibacter sp.).